The primary structure comprises 267 residues: Trehalose-phosphate phosphatase (267 aa).

Asp-20 functions as the Nucleophile in the catalytic mechanism. The Mg(2+) site is built by Asp-20, Asp-22, and Asp-198. 20–22 (DLD) contributes to the substrate binding site.

This sequence belongs to the trehalose phosphatase family. It depends on Mg(2+) as a cofactor.

The enzyme catalyses alpha,alpha-trehalose 6-phosphate + H2O = alpha,alpha-trehalose + phosphate. It participates in glycan biosynthesis; trehalose biosynthesis. Its function is as follows. Removes the phosphate from trehalose 6-phosphate to produce free trehalose. The chain is Trehalose-phosphate phosphatase (otsB) from Salmonella typhimurium (strain LT2 / SGSC1412 / ATCC 700720).